Consider the following 137-residue polypeptide: Small ribosomal subunit protein uS12 (137 aa).

D89 is subject to 3-methylthioaspartic acid. Residues 105-137 form a disordered region; sequence AGVAGRTQRRSKYGAKRPKAGQAAAPAKGKGKK. Over residues 111–123 the composition is skewed to basic residues; the sequence is TQRRSKYGAKRPK. The segment covering 124 to 137 has biased composition (low complexity); it reads AGQAAAPAKGKGKK.

It belongs to the universal ribosomal protein uS12 family. As to quaternary structure, part of the 30S ribosomal subunit. Contacts proteins S8 and S17. May interact with IF1 in the 30S initiation complex.

Its function is as follows. With S4 and S5 plays an important role in translational accuracy. Functionally, interacts with and stabilizes bases of the 16S rRNA that are involved in tRNA selection in the A site and with the mRNA backbone. Located at the interface of the 30S and 50S subunits, it traverses the body of the 30S subunit contacting proteins on the other side and probably holding the rRNA structure together. The combined cluster of proteins S8, S12 and S17 appears to hold together the shoulder and platform of the 30S subunit. The sequence is that of Small ribosomal subunit protein uS12 from Phocaeicola vulgatus (strain ATCC 8482 / DSM 1447 / JCM 5826 / CCUG 4940 / NBRC 14291 / NCTC 11154) (Bacteroides vulgatus).